A 356-amino-acid polypeptide reads, in one-letter code: S-adenosylmethionine:tRNA ribosyltransferase-isomerase (356 aa).

Belongs to the QueA family. As to quaternary structure, monomer.

Its subcellular location is the cytoplasm. The enzyme catalyses 7-aminomethyl-7-carbaguanosine(34) in tRNA + S-adenosyl-L-methionine = epoxyqueuosine(34) in tRNA + adenine + L-methionine + 2 H(+). It functions in the pathway tRNA modification; tRNA-queuosine biosynthesis. Transfers and isomerizes the ribose moiety from AdoMet to the 7-aminomethyl group of 7-deazaguanine (preQ1-tRNA) to give epoxyqueuosine (oQ-tRNA). In Escherichia coli (strain 55989 / EAEC), this protein is S-adenosylmethionine:tRNA ribosyltransferase-isomerase.